A 448-amino-acid polypeptide reads, in one-letter code: Alpha-2B adrenergic receptor (448 aa).

The Extracellular segment spans residues 1–12 (MDHQEPYSVQAT). A helical transmembrane segment spans residues 13 to 38 (AAIAAVITFLILFTIFGNALVILAVL). Residues 39–49 (TSRSLPAPQNL) lie on the Cytoplasmic side of the membrane. A helical membrane pass occupies residues 50–75 (FLVSLAAADILVATLIIPFSLANELL). Topologically, residues 76–85 (GYWYFWRTWC) are extracellular. C85 and C163 form a disulfide bridge. Residues 86–108 (EVYLALDVLFCTSSIVHLCAISL) form a helical membrane-spanning segment. The Cytoplasmic portion of the chain corresponds to 109–130 (DRYWAVSRALEYNSKRTPRRIK). The helical transmembrane segment at 131 to 153 (CIILTVWLIAAVISLPPLIYKGD) threads the bilayer. Residues 154 to 168 (QGPSPRGPQCKINQE) lie on the Extracellular side of the membrane. A helical membrane pass occupies residues 169–192 (AWYILASSIGSFFAPCLIMILVYL). The Cytoplasmic segment spans residues 193 to 370 (RIYLIAKRSH…MTREKRFTFV (178 aa)). The interval 203 to 326 (RRGPRAKGGP…PASMCSPSLQ (124 aa)) is disordered. Over residues 293-309 (AEEEAEEEEEEEGDECE) the composition is skewed to acidic residues. A helical transmembrane segment spans residues 371 to 394 (LAVVIGVFVLCWFPFFFTYSLGAI). Topologically, residues 395–403 (CPQHCKVPH) are extracellular. Residues 404 to 427 (GLFQFFFWIGYCNSSLNPVIYTIF) form a helical membrane-spanning segment. Over 428–448 (NQDFRRAFRRILCRQWTQTAW) the chain is Cytoplasmic. The S-palmitoyl cysteine moiety is linked to residue C440.

This sequence belongs to the G-protein coupled receptor 1 family. Adrenergic receptor subfamily. ADRA2B sub-subfamily. As to quaternary structure, interacts with RAB26. Interacts with PPP1R9B.

Its subcellular location is the cell membrane. Its function is as follows. Alpha-2 adrenergic receptors mediate the catecholamine-induced inhibition of adenylate cyclase through the action of G proteins. The sequence is that of Alpha-2B adrenergic receptor (ADRA2B) from Cavia porcellus (Guinea pig).